Reading from the N-terminus, the 450-residue chain is Probable glycine dehydrogenase (decarboxylating) subunit 1 (450 aa).

The protein belongs to the GcvP family. N-terminal subunit subfamily. The glycine cleavage system is composed of four proteins: P, T, L and H. In this organism, the P 'protein' is a heterodimer of two subunits.

It catalyses the reaction N(6)-[(R)-lipoyl]-L-lysyl-[glycine-cleavage complex H protein] + glycine + H(+) = N(6)-[(R)-S(8)-aminomethyldihydrolipoyl]-L-lysyl-[glycine-cleavage complex H protein] + CO2. In terms of biological role, the glycine cleavage system catalyzes the degradation of glycine. The P protein binds the alpha-amino group of glycine through its pyridoxal phosphate cofactor; CO(2) is released and the remaining methylamine moiety is then transferred to the lipoamide cofactor of the H protein. The protein is Probable glycine dehydrogenase (decarboxylating) subunit 1 of Brevibacillus brevis (strain 47 / JCM 6285 / NBRC 100599).